We begin with the raw amino-acid sequence, 82 residues long: Sec-independent protein translocase protein TatA (82 aa).

Residues 1–21 (MGSFSIWHWLIVLLVVVMIFG) traverse the membrane as a helical segment. The tract at residues 39–82 (FKDGMKDGSTTDAPAASSAPAAQVTGQPANSDKSTIDVEARQKS) is disordered. Over residues 51–60 (APAASSAPAA) the composition is skewed to low complexity. Over residues 62–71 (VTGQPANSDK) the composition is skewed to polar residues. Residues 72-82 (STIDVEARQKS) show a composition bias toward basic and acidic residues.

Belongs to the TatA/E family. In terms of assembly, the Tat system comprises two distinct complexes: a TatABC complex, containing multiple copies of TatA, TatB and TatC subunits, and a separate TatA complex, containing only TatA subunits. Substrates initially bind to the TatABC complex, which probably triggers association of the separate TatA complex to form the active translocon.

It localises to the cell inner membrane. Functionally, part of the twin-arginine translocation (Tat) system that transports large folded proteins containing a characteristic twin-arginine motif in their signal peptide across membranes. TatA could form the protein-conducting channel of the Tat system. The sequence is that of Sec-independent protein translocase protein TatA from Variovorax paradoxus (strain S110).